Here is a 268-residue protein sequence, read N- to C-terminus: Zygote formation protein zyg1 (268 aa).

Plays an essential role in zygote formation by inducing sexual cell fusion. Overexpressing cells eventually formed many loose mounds, in which giant multinucleate cells were surrounded by normal-sized cells. This is Zygote formation protein zyg1 (zyg1) from Dictyostelium mucoroides (Slime mold).